We begin with the raw amino-acid sequence, 157 residues long: METLKSKTKTRVLPSWMTAPVDERKVVSVKTATRKQTAAWAQRVGAATRAPATETVYCMNEAEMVDVALGILIEGRKQEKPWEQRSLEATDKLQLSPPCSSSPGSSSEEEDSRISSLAPGLSPPRGPEASDSPCSRSPEEEKEEEDALKYVREIFFS.

At Met1 the chain carries N-acetylmethionine. The KBM motif lies at 1 to 21; the sequence is METLKSKTKTRVLPSWMTAPV. The segment covering 80–91 has biased composition (basic and acidic residues); that stretch reads KPWEQRSLEATD. Positions 80–148 are disordered; the sequence is KPWEQRSLEA…EEEKEEEDAL (69 aa). Residues 96-106 are compositionally biased toward low complexity; the sequence is SPPCSSSPGSS. An XLM motif is present at residues 147–157; the sequence is ALKYVREIFFS.

As to quaternary structure, interacts (via KBM motif) with XRCC5/Ku80 and XRCC6/Ku70 heterodimer. Interacts (via XLF motif) with TRIM28/KAP1, ATM, MRE11, NBN and RAD50. Interacts with splicing factor SF3B1. Interacts with ERCC6L2; this interaction is DNA independent.

It localises to the cytoplasm. The protein resides in the nucleus. Its subcellular location is the chromosome. Cell-cycle-specific regulator of classical non-homologous end joining (NHEJ) of DNA double-strand break (DSB) repair, which can act both as an activator or inhibitor of NHEJ, depending on the cell cycle phase. Acts as a regulator of DNA repair pathway choice by specifically inhibiting classical NHEJ during the S and G2 phases, thereby promoting error-free repair by homologous recombination during cell cycle phases when sister chromatids are present. Preferentially protects single-stranded overhangs at break sites by inhibiting classical NHEJ, thereby creating a local environment that favors homologous recombination. Acts via interaction with XRCC5/Ku80 and XRCC6/Ku70. In contrast, acts as an activator of NHEJ during G1 phase of the cell cycle: promotes classical NHEJ in G1 phase cells via multivalent interactions that increase the affinity of DNA damage response proteins for DSB-associated chromatin. Also involved in immunoglobulin V(D)J recombination. May also act as an indirect regulator of proteasome. In Mus musculus (Mouse), this protein is Cell cycle regulator of non-homologous end joining.